Reading from the N-terminus, the 59-residue chain is Large ribosomal subunit protein bL33 (59 aa).

The protein belongs to the bacterial ribosomal protein bL33 family.

This Borreliella afzelii (strain PKo) (Borrelia afzelii) protein is Large ribosomal subunit protein bL33.